The primary structure comprises 384 residues: S-adenosylmethionine synthase (384 aa).

H15 contacts ATP. D17 is a Mg(2+) binding site. Residue E43 participates in K(+) binding. L-methionine contacts are provided by E56 and Q99. The tract at residues 99–109 (QSPDINQGVDR) is flexible loop. Residues 164-166 (DAK), 230-231 (RF), D239, 245-246 (RK), A262, and K266 contribute to the ATP site. Residue D239 coordinates L-methionine. Position 270 (K270) interacts with L-methionine.

This sequence belongs to the AdoMet synthase family. As to quaternary structure, homotetramer; dimer of dimers. It depends on Mg(2+) as a cofactor. Requires K(+) as cofactor.

The protein resides in the cytoplasm. The catalysed reaction is L-methionine + ATP + H2O = S-adenosyl-L-methionine + phosphate + diphosphate. It functions in the pathway amino-acid biosynthesis; S-adenosyl-L-methionine biosynthesis; S-adenosyl-L-methionine from L-methionine: step 1/1. Its function is as follows. Catalyzes the formation of S-adenosylmethionine (AdoMet) from methionine and ATP. The overall synthetic reaction is composed of two sequential steps, AdoMet formation and the subsequent tripolyphosphate hydrolysis which occurs prior to release of AdoMet from the enzyme. The chain is S-adenosylmethionine synthase from Proteus mirabilis (strain HI4320).